The chain runs to 156 residues: Ribonuclease H (156 aa).

In terms of domain architecture, RNase H type-1 spans 3-144; that stretch reads ELKLIHIFTD…CDVLARTAAE (142 aa). 4 residues coordinate Mg(2+): D12, E50, D72, and D136.

It belongs to the RNase H family. Monomer. Requires Mg(2+) as cofactor.

It localises to the cytoplasm. The catalysed reaction is Endonucleolytic cleavage to 5'-phosphomonoester.. In terms of biological role, endonuclease that specifically degrades the RNA of RNA-DNA hybrids. In Shewanella baltica (strain OS223), this protein is Ribonuclease H.